The sequence spans 483 residues: 6-phosphogluconate dehydrogenase, decarboxylating (483 aa).

NADP(+) is bound by residues 10–15 and 33–35; these read GLAVMG and NRT. Position 38 is an N6-acetyllysine (Lys-38). Position 57 is a phosphoserine (Ser-57). NADP(+) contacts are provided by residues 75–77 and Asn-103; that span reads VKA. Asn-103, Ser-129, and Gly-131 together coordinate substrate. Ser-129 carries the post-translational modification Phosphoserine. Lys-184 acts as the Proton acceptor in catalysis. 187–188 contacts substrate; the sequence is HN. The Proton donor role is filled by Glu-191. Tyr-192, Lys-261, Arg-288, Arg-447, and His-453 together coordinate substrate. Residue 478 to 481 participates in NADP(+) binding; the sequence is SSSY.

The protein belongs to the 6-phosphogluconate dehydrogenase family. In terms of assembly, homodimer.

The protein resides in the cytoplasm. It catalyses the reaction 6-phospho-D-gluconate + NADP(+) = D-ribulose 5-phosphate + CO2 + NADPH. It participates in carbohydrate degradation; pentose phosphate pathway; D-ribulose 5-phosphate from D-glucose 6-phosphate (oxidative stage): step 3/3. Its function is as follows. Catalyzes the oxidative decarboxylation of 6-phosphogluconate to ribulose 5-phosphate and CO(2), with concomitant reduction of NADP to NADPH. The sequence is that of 6-phosphogluconate dehydrogenase, decarboxylating (PGD) from Ovis aries (Sheep).